The following is a 431-amino-acid chain: D-inositol 3-phosphate glycosyltransferase (431 aa).

His-14 is a binding site for 1D-myo-inositol 3-phosphate. Residues 20-21 (QP) and Gly-28 each bind UDP-N-acetyl-alpha-D-glucosamine. 1D-myo-inositol 3-phosphate is bound by residues 25–30 (DAGGMN), Lys-83, Tyr-116, Thr-140, and Arg-160. UDP-N-acetyl-alpha-D-glucosamine is bound by residues Arg-240 and Lys-245. Residues Tyr-315, Arg-316, and Ala-318 each contribute to the Mg(2+) site. Glu-328 and Glu-336 together coordinate UDP-N-acetyl-alpha-D-glucosamine. Mg(2+) is bound at residue Thr-342.

It belongs to the glycosyltransferase group 1 family. MshA subfamily. Homodimer.

The enzyme catalyses 1D-myo-inositol 3-phosphate + UDP-N-acetyl-alpha-D-glucosamine = 1D-myo-inositol 2-acetamido-2-deoxy-alpha-D-glucopyranoside 3-phosphate + UDP + H(+). Functionally, catalyzes the transfer of a N-acetyl-glucosamine moiety to 1D-myo-inositol 3-phosphate to produce 1D-myo-inositol 2-acetamido-2-deoxy-glucopyranoside 3-phosphate in the mycothiol biosynthesis pathway. This chain is D-inositol 3-phosphate glycosyltransferase, found in Thermomonospora curvata (strain ATCC 19995 / DSM 43183 / JCM 3096 / KCTC 9072 / NBRC 15933 / NCIMB 10081 / Henssen B9).